The following is a 372-amino-acid chain: L-selectin (372 aa).

Positions 1-28 are cleaved as a signal peptide; that stretch reads MIFPWKCQSTQRDLWNIFKLWGWTMLCC. A propeptide spanning residues 29-38 is cleaved from the precursor; that stretch reads DFLAHHGTDC. Over 39–332 the chain is Extracellular; the sequence is WTYHYSEKPM…FSMIKEGDYN (294 aa). The 101-residue stretch at 55–155 folds into the C-type lectin domain; that stretch reads RFCRDNYTDL…ACHKLKAALC (101 aa). 9 disulfide bridges follow: cysteine 57/cysteine 155, cysteine 128/cysteine 147, cysteine 160/cysteine 171, cysteine 165/cysteine 180, cysteine 182/cysteine 191, cysteine 197/cysteine 241, cysteine 227/cysteine 254, cysteine 259/cysteine 303, and cysteine 289/cysteine 316. 2 N-linked (GlcNAc...) asparagine glycosylation sites follow: asparagine 60 and asparagine 104. Residues glutamate 118, asparagine 120, glutamate 126, asparagine 143, and aspartate 144 each coordinate Ca(2+). An EGF-like domain is found at 156-192; sequence YTASCQPWSCSGHGECVEIINNYTCNCDVGYYGPQCQ. N-linked (GlcNAc...) asparagine glycosylation is present at asparagine 177. Sushi domains are found at residues 195-256 and 257-318; these read IQCE…TCQV and IQCE…ICQK. N-linked (GlcNAc...) asparagine glycosylation is found at asparagine 232, asparagine 246, and asparagine 271. Residues 333-355 form a helical membrane-spanning segment; that stretch reads PLFIPVAVMVTAFSGLAFIIWLA. Topologically, residues 356-372 are cytoplasmic; it reads RRLKKGKKSKRSMNDPY.

It belongs to the selectin/LECAM family. As to quaternary structure, interaction with SELPLG/PSGL1 and PODXL2 is required for promoting recruitment and rolling of leukocytes. This interaction is dependent on the sialyl Lewis X glycan modification of SELPLG and PODXL2, and tyrosine sulfation modifications of SELPLG. Sulfation on 'Tyr-51' of SELPLG is important for L-selectin binding. Post-translationally, N-glycosylated. Expressed in B-cell lines and T-lymphocytes.

The protein resides in the cell membrane. Functionally, calcium-dependent lectin that mediates cell adhesion by binding to glycoproteins on neighboring cells. Mediates the adherence of lymphocytes to endothelial cells of high endothelial venules in peripheral lymph nodes. Promotes initial tethering and rolling of leukocytes in endothelia. The polypeptide is L-selectin (SELL) (Homo sapiens (Human)).